Consider the following 142-residue polypeptide: Hemoglobin subunit alpha (142 aa).

The region spanning 1–142 (VLSAADKNNV…VSTVLTSKYR (142 aa)) is the Globin domain. Serine 3 is modified (phosphoserine). Lysine 7 and lysine 11 each carry N6-succinyllysine. Lysine 16 bears the N6-acetyllysine; alternate mark. N6-succinyllysine; alternate is present on lysine 16. The residue at position 24 (tyrosine 24) is a Phosphotyrosine. Serine 35 bears the Phosphoserine mark. An N6-succinyllysine modification is found at lysine 40. Histidine 58 is an O2 binding site. Heme b is bound at residue histidine 87. Serine 102 carries the phosphoserine modification. Residue threonine 108 is modified to Phosphothreonine. Phosphoserine is present on serine 125. Residues threonine 135 and threonine 138 each carry the phosphothreonine modification. At serine 139 the chain carries Phosphoserine.

The protein belongs to the globin family. As to quaternary structure, heterotetramer of two alpha chains and two beta chains. As to expression, red blood cells.

Involved in oxygen transport from the lung to the various peripheral tissues. In terms of biological role, hemopressin acts as an antagonist peptide of the cannabinoid receptor CNR1. Hemopressin-binding efficiently blocks cannabinoid receptor CNR1 and subsequent signaling. The polypeptide is Hemoglobin subunit alpha (HBA) (Procavia capensis habessinica (Abyssinian hyrax)).